The sequence spans 117 residues: UPF0344 protein GK0697 (117 aa).

4 helical membrane passes run 1-21, 39-59, 60-80, and 97-117; these read MTHA…LAVS, LFYI…ASIS, ALYW…EMVL, and VIAL…FDLF.

This sequence belongs to the UPF0344 family.

Its subcellular location is the cell membrane. The protein is UPF0344 protein GK0697 of Geobacillus kaustophilus (strain HTA426).